The sequence spans 24 residues: SPCTCSTCNCAGACNSCSCTSCSH.

Residues Cys-3, Cys-5, Cys-8, Cys-10, Cys-17, Cys-19, and Cys-22 each coordinate Cd(2+).

This sequence belongs to the metallothionein superfamily. Type 8 family. In terms of processing, contains 4 disulfide bonds.

Its function is as follows. Metallothioneins have a high content of cysteine residues that bind various heavy metals. In Neonectria lugdunensis (Aquatic fungus), this protein is Metallothionein.